A 328-amino-acid polypeptide reads, in one-letter code: Tyrosine recombinase XerC (328 aa).

Residues 13 to 100 enclose the Core-binding (CB) domain; it reads QAPHPQIAAY…AWRGWFKWMA (88 aa). Residues 122-319 enclose the Tyr recombinase domain; sequence RLPKALSVEQ…DFQHLAKIYD (198 aa). Residues arginine 162, lysine 197, histidine 271, arginine 274, and histidine 297 contribute to the active site. Tyrosine 306 serves as the catalytic O-(3'-phospho-DNA)-tyrosine intermediate.

This sequence belongs to the 'phage' integrase family. XerC subfamily. As to quaternary structure, forms a cyclic heterotetrameric complex composed of two molecules of XerC and two molecules of XerD.

Its subcellular location is the cytoplasm. Its function is as follows. Site-specific tyrosine recombinase, which acts by catalyzing the cutting and rejoining of the recombining DNA molecules. The XerC-XerD complex is essential to convert dimers of the bacterial chromosome into monomers to permit their segregation at cell division. It also contributes to the segregational stability of plasmids. The polypeptide is Tyrosine recombinase XerC (Ralstonia pickettii (strain 12J)).